A 574-amino-acid polypeptide reads, in one-letter code: Excitatory amino acid transporter 2 (574 aa).

Residues 1–44 are Cytoplasmic-facing; sequence MASTEGANNMPKQVEVRMHDSHLGSEEPKHRHLGLRLCDKLGKN. Phosphoserine occurs at positions 3, 21, and 25. Residue Cys38 is the site of S-palmitoyl cysteine attachment. The chain crosses the membrane as a helical span at residues 45-64; sequence LLLTLTVFGVILGAVCGGLL. The Extracellular portion of the chain corresponds to 65-87; it reads RLASPIHPDVVMLIAFPGDILMR. The chain crosses the membrane as a helical span at residues 88 to 108; it reads MLKMLILPLIISSLITGLSGL. Topologically, residues 109–120 are cytoplasmic; that stretch reads DAKASGRLGTRA. Residues 121–142 form a helical membrane-spanning segment; the sequence is MVYYMSTTIIAAVLGVILVLAI. Residues 143-235 are Extracellular-facing; the sequence is HPGNPKLKKQ…TKMVIKKGLE (93 aa). Asn206 and Asn216 each carry an N-linked (GlcNAc...) asparagine glycan. A helical transmembrane segment spans residues 236–259; it reads FKDGMNVLGLIGFFIAFGIAMGKM. Residues 260–268 lie on the Cytoplasmic side of the membrane; that stretch reads GDQAKLMVD. A helical membrane pass occupies residues 269–296; that stretch reads FFNILNEIVMKLVIMIMWYSPLGIACLI. Residues 297–317 are Extracellular-facing; that stretch reads CGKIIAIKDLEVVARQLGMYM. A helical membrane pass occupies residues 318–339; that stretch reads VTVIIGLIIHGGIFLPLIYFVV. The Cytoplasmic segment spans residues 340–344; the sequence is TRKNP. Positions 345–375 form an intramembrane region, discontinuously helical; the sequence is FSFFAGIFQAWITALGTASSAGTLPVTFRCL. Residue 362 to 364 participates in L-aspartate binding; that stretch reads ASS. At 376-384 the chain is on the cytoplasmic side; sequence EENLGIDKR. A helical transmembrane segment spans residues 385–411; the sequence is VTRFVLPVGATINMDGTALYEAVAAIF. Na(+) contacts are provided by Gly393, Thr395, and Asn397. L-aspartate is bound at residue Thr401. Over 412–424 the chain is Extracellular; it reads IAQMNGVVLDGGQ. The discontinuously helical intramembrane region spans 425 to 458; it reads IVTVSLTATLASVGAASIPSAGLVTMLLILTAVG. 442–446 provides a ligand contact to L-aspartate; the sequence is IPSAG. Topologically, residues 459 to 471 are extracellular; the sequence is LPTEDISLLVAVD. Residues 472–493 form a helical membrane-spanning segment; sequence WLLDRMRTSVNVVGDSFGAGIV. Residues Asp475 and Asn482 each coordinate L-aspartate. The Na(+) site is built by Asn482 and Asp486. Residues 494–574 are Cytoplasmic-facing; the sequence is YHLSKSELDT…VEEEPWKREK (81 aa). Residues Ser506, Ser521, Ser532, and Ser534 each carry the phosphoserine modification. Tyr539 is subject to Phosphotyrosine. Phosphoserine occurs at positions 544, 560, and 564.

It belongs to the dicarboxylate/amino acid:cation symporter (DAACS) (TC 2.A.23) family. SLC1A2 subfamily. As to quaternary structure, homotrimer. Isoform 3 can oligomerize with isoform 1. Interacts with AJUBA. In terms of processing, glycosylated. Post-translationally, palmitoylation at Cys-38 is not required for correct subcellular localization, but is important for glutamate uptake activity.

The protein resides in the cell membrane. It catalyses the reaction K(+)(in) + L-glutamate(out) + 3 Na(+)(out) + H(+)(out) = K(+)(out) + L-glutamate(in) + 3 Na(+)(in) + H(+)(in). The enzyme catalyses K(+)(in) + L-aspartate(out) + 3 Na(+)(out) + H(+)(out) = K(+)(out) + L-aspartate(in) + 3 Na(+)(in) + H(+)(in). The catalysed reaction is D-aspartate(out) + K(+)(in) + 3 Na(+)(out) + H(+)(out) = D-aspartate(in) + K(+)(out) + 3 Na(+)(in) + H(+)(in). In terms of biological role, sodium-dependent, high-affinity amino acid transporter that mediates the uptake of L-glutamate and also L-aspartate and D-aspartate. Functions as a symporter that transports one amino acid molecule together with two or three Na(+) ions and one proton, in parallel with the counter-transport of one K(+) ion. Mediates Cl(-) flux that is not coupled to amino acid transport; this avoids the accumulation of negative charges due to aspartate and Na(+) symport. Essential for the rapid removal of released glutamate from the synaptic cleft, and for terminating the postsynaptic action of glutamate. The sequence is that of Excitatory amino acid transporter 2 from Homo sapiens (Human).